The following is a 169-amino-acid chain: Glutathione peroxidase (169 aa).

Sec43 is a catalytic residue. A non-standard amino acid (selenocysteine) is located at residue Sec43.

It belongs to the glutathione peroxidase family.

It catalyses the reaction 2 glutathione + H2O2 = glutathione disulfide + 2 H2O. The protein is Glutathione peroxidase (GPX1) of Schistosoma mansoni (Blood fluke).